The following is a 376-amino-acid chain: Geranylgeranyl transferase type-1 subunit beta (376 aa).

PFTB repeat units follow at residues 128 to 179, 192 to 231, 259 to 301, and 310 to 353; these read KRSL…YICG, TEKL…ALLS, MKFE…HLLT, and TELV…ALIE. Residues 216–218 and 280–283 each bind geranylgeranyl diphosphate; these read HSG and RENK. Aspartate 286 and cysteine 288 together coordinate Zn(2+). Residue 289-292 participates in geranylgeranyl diphosphate binding; it reads YAFW. Histidine 341 contacts Zn(2+).

This sequence belongs to the protein prenyltransferase subunit beta family. Heterodimer of an alpha (RAM2) and a beta (CDC43) subunit. Requires Zn(2+) as cofactor. The cofactor is Mg(2+).

It is found in the cytoplasm. The enzyme catalyses geranylgeranyl diphosphate + L-cysteinyl-[protein] = S-geranylgeranyl-L-cysteinyl-[protein] + diphosphate. In terms of biological role, catalyzes the transfer of a geranyl-geranyl moiety from geranyl-geranyl diphosphate to proteins having the C-terminal sequence Cys-Ile-Ile-Leu or Cys-Val-Leu-Leu. Acts, among other substrates, on Rho1 and Rho2 and CDC42 proteins. Participates in a RAS-like C-terminal modification of proteins involved in nuclear division and bud growth. It is involved in bud positioning and cell polarity. The beta subunit is responsible for isoprenoid and peptide-binding. The chain is Geranylgeranyl transferase type-1 subunit beta (CDC43) from Saccharomyces cerevisiae (strain ATCC 204508 / S288c) (Baker's yeast).